A 431-amino-acid polypeptide reads, in one-letter code: Phosphoribosylamine--glycine ligase (431 aa).

One can recognise an ATP-grasp domain in the interval 107–315; sequence RWLMEEYKIP…LVEIGEEIVD (209 aa). 134-193 contributes to the ATP binding site; sequence IDDFGRPVVVKPLGLTGGKGVKVVGYQLKDNEEAKAYAEELIKRDGKVLIEERTDGVEFT. Mg(2+) contacts are provided by Gln273, Glu285, and Asn287. Positions 273, 285, and 287 each coordinate Mn(2+).

It belongs to the GARS family. It depends on Mg(2+) as a cofactor. The cofactor is Mn(2+).

It catalyses the reaction 5-phospho-beta-D-ribosylamine + glycine + ATP = N(1)-(5-phospho-beta-D-ribosyl)glycinamide + ADP + phosphate + H(+). It participates in purine metabolism; IMP biosynthesis via de novo pathway; N(1)-(5-phospho-D-ribosyl)glycinamide from 5-phospho-alpha-D-ribose 1-diphosphate: step 2/2. The protein is Phosphoribosylamine--glycine ligase of Thermococcus kodakarensis (strain ATCC BAA-918 / JCM 12380 / KOD1) (Pyrococcus kodakaraensis (strain KOD1)).